A 246-amino-acid chain; its full sequence is tRNA pseudouridine synthase C (246 aa).

Residue Asp58 is part of the active site.

Belongs to the pseudouridine synthase RluA family.

It catalyses the reaction uridine(65) in tRNA = pseudouridine(65) in tRNA. Responsible for synthesis of pseudouridine from uracil-65 in transfer RNAs. The sequence is that of tRNA pseudouridine synthase C (truC) from Vibrio parahaemolyticus serotype O3:K6 (strain RIMD 2210633).